The following is a 711-amino-acid chain: DNA topoisomerase 3 (711 aa).

Residues 2–135 (KSLILAEKPS…LRRLWISSVT (134 aa)) enclose the Toprim domain. Mg(2+) contacts are provided by Glu8 and Asp104. In terms of domain architecture, Topo IA-type catalytic spans 152–580 (YNDLYYAALA…EMKDFTKDVV (429 aa)). The segment at 186–191 (SLGRVQ) is interaction with DNA. The active-site O-(5'-phospho-DNA)-tyrosine intermediate is Tyr305. A disordered region spans residues 691-711 (MNKNEGLDNNPFKDALKNLNL).

This sequence belongs to the type IA topoisomerase family. The cofactor is Mg(2+).

The enzyme catalyses ATP-independent breakage of single-stranded DNA, followed by passage and rejoining.. Its function is as follows. Releases the supercoiling and torsional tension of DNA, which is introduced during the DNA replication and transcription, by transiently cleaving and rejoining one strand of the DNA duplex. Introduces a single-strand break via transesterification at a target site in duplex DNA. The scissile phosphodiester is attacked by the catalytic tyrosine of the enzyme, resulting in the formation of a DNA-(5'-phosphotyrosyl)-enzyme intermediate and the expulsion of a 3'-OH DNA strand. The free DNA strand then undergoes passage around the unbroken strand, thus removing DNA supercoils. Finally, in the religation step, the DNA 3'-OH attacks the covalent intermediate to expel the active-site tyrosine and restore the DNA phosphodiester backbone. This chain is DNA topoisomerase 3, found in Staphylococcus aureus (strain MRSA252).